Here is a 579-residue protein sequence, read N- to C-terminus: Probable cytochrome c oxidase subunit 1-alpha (579 aa).

The segment at 1-21 (MSILNEPQGAAAAEDSYENEL) is disordered. Residues 44–64 (IGTLYLVTSFAFFCIGGVMAL) traverse the membrane as a helical segment. Histidine 90 lines the Fe(II)-heme a pocket. A run of 6 helical transmembrane segments spans residues 93–113 (IMLL…IMPL), 125–145 (LNMF…GGFL), 174–194 (MWIM…VNFI), 217–237 (VLLT…ALFA), 262–282 (LFWF…FGII), and 295–315 (FGYM…VTVW). Residues histidine 268 and tyrosine 272 each contribute to the Cu cation site. The 1'-histidyl-3'-tyrosine (His-Tyr) cross-link spans 268–272 (HPEVY). Residues histidine 317 and histidine 318 each contribute to the Cu cation site. 5 consecutive transmembrane segments (helical) span residues 319–339 (MYVT…LIAV), 363–383 (MLWA…GVIL), 397–417 (FVVA…MFSG), 437–457 (ITFW…HWLG), and 480–500 (ISTI…YNVW). Residue histidine 401 coordinates heme a3. Residue histidine 403 coordinates Fe(II)-heme a.

The protein belongs to the heme-copper respiratory oxidase family. Associates with subunits II, III and IV to form cytochrome c oxidase. Cu(2+) serves as cofactor. It depends on heme as a cofactor.

The protein resides in the cell membrane. The catalysed reaction is 4 Fe(II)-[cytochrome c] + O2 + 8 H(+)(in) = 4 Fe(III)-[cytochrome c] + 2 H2O + 4 H(+)(out). The protein operates within energy metabolism; oxidative phosphorylation. Functionally, cytochrome c oxidase is the component of the respiratory chain that catalyzes the reduction of oxygen to water. Subunits 1-3 form the functional core of the enzyme complex. CO I is the catalytic subunit of the enzyme. Electrons originating in cytochrome c are transferred via the copper A center of subunit 2 and heme A of subunit 1 to the bimetallic center formed by heme A3 and copper B. This Streptomyces avermitilis (strain ATCC 31267 / DSM 46492 / JCM 5070 / NBRC 14893 / NCIMB 12804 / NRRL 8165 / MA-4680) protein is Probable cytochrome c oxidase subunit 1-alpha (ctaD1).